A 192-amino-acid polypeptide reads, in one-letter code: Amelogenin, Y isoform (192 aa).

An N-terminal signal peptide occupies residues 1–16; it reads MGTWILFACLLGAAYS. The disordered stretch occupies residues 73–192; it reads QSPQNHALQP…TDKTKREEVD (120 aa). A compositionally biased stretch (low complexity) spans 87 to 105; the sequence is PMVPAQQPVVPQQPMMPVP. Residues 108 to 117 show a composition bias toward polar residues; that stretch reads HSMTPIQHHQ. Positions 132-173 are enriched in pro residues; the sequence is PIQPQPHQPLQPQPPVHPIQRLPPQPPLPPIFPMQPLPPVLP.

It belongs to the amelogenin family.

Its subcellular location is the secreted. The protein resides in the extracellular space. It localises to the extracellular matrix. Its function is as follows. Plays a role in the biomineralization of teeth. Seems to regulate the formation of crystallites during the secretory stage of tooth enamel development. Thought to play a major role in the structural organization and mineralization of developing enamel. The chain is Amelogenin, Y isoform (AMELY) from Bos taurus (Bovine).